The primary structure comprises 465 residues: Chromosomal replication initiator protein DnaA (465 aa).

The domain I, interacts with DnaA modulators stretch occupies residues 1–87 (MLWTDCLTRL…RPGSILSSSE (87 aa)). The tract at residues 81 to 123 (SILSSSEQPATTTAALQTAPIPQPAKVKREPEPVANTAVSSKS) is disordered. The segment covering 88–100 (QPATTTAALQTAP) has biased composition (low complexity). Residues 88-127 (QPATTTAALQTAPIPQPAKVKREPEPVANTAVSSKSSKKK) are domain II. A domain III, AAA+ region region spans residues 128–345 (LLNPQFTFSL…GALNKVVAIS (218 aa)). ATP-binding residues include G173, G175, K176, and T177. The tract at residues 346 to 465 (RFKGAPIDLD…YKNLLRLLQS (120 aa)) is domain IV, binds dsDNA.

Belongs to the DnaA family. As to quaternary structure, oligomerizes as a right-handed, spiral filament on DNA at oriC.

It is found in the cytoplasm. Its function is as follows. Plays an essential role in the initiation and regulation of chromosomal replication. ATP-DnaA binds to the origin of replication (oriC) to initiate formation of the DNA replication initiation complex once per cell cycle. Binds the DnaA box (a 9 base pair repeat at the origin) and separates the double-stranded (ds)DNA. Forms a right-handed helical filament on oriC DNA; dsDNA binds to the exterior of the filament while single-stranded (ss)DNA is stabiized in the filament's interior. The ATP-DnaA-oriC complex binds and stabilizes one strand of the AT-rich DNA unwinding element (DUE), permitting loading of DNA polymerase. After initiation quickly degrades to an ADP-DnaA complex that is not apt for DNA replication. Binds acidic phospholipids. The sequence is that of Chromosomal replication initiator protein DnaA from Acinetobacter baumannii (strain AB307-0294).